A 159-amino-acid polypeptide reads, in one-letter code: Transcription elongation factor A protein-like 1 (159 aa).

The interval 1-121 (MDKPRKENEE…QFKGDIHGRN (121 aa)) is disordered. Positions 17 to 34 (KTDEERPPVEHSPEKQSP) are enriched in basic and acidic residues. Residues 37-54 (QSSEEQSSEEEFFPEELL) show a composition bias toward acidic residues. 2 stretches are compositionally biased toward basic and acidic residues: residues 64 to 80 (SEER…DLFE) and 95 to 119 (HKLE…DIHG).

The protein belongs to the TFS-II family. TFA subfamily.

Its subcellular location is the nucleus. Its function is as follows. May be involved in transcriptional regulation. Modulates various viral and cellular promoters in a promoter context-dependent manner. Does not bind DNA directly. In Gorilla gorilla gorilla (Western lowland gorilla), this protein is Transcription elongation factor A protein-like 1.